The following is a 471-amino-acid chain: Alpha-galactosidase (471 aa).

The signal sequence occupies residues methionine 1 to glycine 18. A disulfide bond links cysteine 42 and cysteine 74. Substrate-binding residues include aspartate 72 and aspartate 73. Asparagine 82 carries N-linked (GlcNAc...) asparagine glycosylation. The cysteines at positions 121 and 151 are disulfide-linked. Lysine 147 is a binding site for substrate. The Nucleophile role is filled by aspartate 149. Residue asparagine 175 is glycosylated (N-linked (GlcNAc...) asparagine). Substrate is bound at residue arginine 205. The active-site Proton donor is the aspartate 209. 2 disulfide bridges follow: cysteine 221–cysteine 237 and cysteine 223–cysteine 230. Glutamine 251 serves as a coordination point for substrate. N-linked (GlcNAc...) asparagine glycans are attached at residues asparagine 270, asparagine 361, asparagine 370, asparagine 417, asparagine 422, asparagine 435, and asparagine 454.

Belongs to the glycosyl hydrolase 27 family. As to quaternary structure, homotetramer.

It is found in the secreted. The enzyme catalyses Hydrolysis of terminal, non-reducing alpha-D-galactose residues in alpha-D-galactosides, including galactose oligosaccharides, galactomannans and galactolipids.. This chain is Alpha-galactosidase (MEL), found in Saccharomyces mikatae (Yeast).